Here is a 221-residue protein sequence, read N- to C-terminus: Vesicle-associated membrane protein 713 (221 aa).

Ala2 carries the post-translational modification N-acetylalanine. At 2–190 (AIIFALVARG…RTIMWWRNVK (189 aa)) the chain is on the cytoplasmic side. In terms of domain architecture, Longin spans 7 to 112 (LVARGTVVLS…SMNDEFSRVL (106 aa)). The 61-residue stretch at 127–187 (RMSRIKGEMS…RRYRTIMWWR (61 aa)) folds into the v-SNARE coiled-coil homology domain. The chain crosses the membrane as a helical; Anchor for type IV membrane protein span at residues 191–211 (LTIALILVLALVVYIAMAFVC). Residues 212-221 (HGPSLPSCFK) lie on the Vesicular side of the membrane.

It belongs to the synaptobrevin family. Interacts with subunits of the vacuole protein sorting (HOPS) complex including VPS11, VCL1, VPS18, VPS33, VPS39 and VPS41. Highly expressed in stems and roots. Detected in flowers and leaves.

Its subcellular location is the vacuole membrane. The protein localises to the prevacuolar compartment membrane. Involved in the targeting and/or fusion of transport vesicles to their target membrane. The sequence is that of Vesicle-associated membrane protein 713 from Arabidopsis thaliana (Mouse-ear cress).